We begin with the raw amino-acid sequence, 241 residues long: Proteasome subunit alpha type-5 (241 aa).

It belongs to the peptidase T1A family. In terms of assembly, the 26S proteasome consists of a 20S proteasome core and two 19S regulatory subunits. The 20S proteasome core is composed of 28 subunits that are arranged in four stacked rings, resulting in a barrel-shaped structure. The two end rings are each formed by seven alpha subunits, and the two central rings are each formed by seven beta subunits. The catalytic chamber with the active sites is on the inside of the barrel.

Its subcellular location is the cytoplasm. It is found in the nucleus. Functionally, the proteasome is a multicatalytic proteinase complex which is characterized by its ability to cleave peptides with Arg, Phe, Tyr, Leu, and Glu adjacent to the leaving group at neutral or slightly basic pH. The proteasome has an ATP-dependent proteolytic activity. The sequence is that of Proteasome subunit alpha type-5 (psmA5) from Dictyostelium discoideum (Social amoeba).